A 100-amino-acid chain; its full sequence is Toxin ParE3 (100 aa).

The protein belongs to the RelE toxin family.

Its function is as follows. Toxic component of a type II toxin-antitoxin (TA) system. Its toxic effect is neutralized by coexpression with cognate antitoxin ParD3 but no other ParD or RelB antitoxin. This is Toxin ParE3 (parE3) from Caulobacter vibrioides (strain ATCC 19089 / CIP 103742 / CB 15) (Caulobacter crescentus).